Reading from the N-terminus, the 247-residue chain is Mast cell protease 8 (247 aa).

Positions 1–19 (MFLLLVLLVAALPVNAEGG) are cleaved as a signal peptide. A propeptide (activation peptide) is located at residue Glu-20. The Peptidase S1 domain occupies 21-242 (IIWGTESKPH…FMPWIRKTMK (222 aa)). N-linked (GlcNAc...) asparagine glycosylation is present at Asn-41. Cys-49 and Cys-65 are disulfide-bonded. His-64 serves as the catalytic Charge relay system. Asn-71 and Asn-101 each carry an N-linked (GlcNAc...) asparagine glycan. The Charge relay system role is filled by Asp-107. 2 disulfide bridges follow: Cys-141/Cys-206 and Cys-171/Cys-185. N-linked (GlcNAc...) asparagine glycosylation is found at Asn-151 and Asn-179. Ser-200 acts as the Charge relay system in catalysis.

The protein belongs to the peptidase S1 family. Granzyme subfamily.

The protein localises to the secreted. It localises to the cytoplasmic granule. The protein is Mast cell protease 8 (Mcpt8) of Mus musculus (Mouse).